Here is a 455-residue protein sequence, read N- to C-terminus: Serine--tRNA ligase (455 aa).

252 to 254 (TAE) contacts L-serine. ATP-binding positions include 283 to 285 (RKE) and V299. E306 contacts L-serine. Residue 370 to 373 (EVVS) coordinates ATP. T406 contributes to the L-serine binding site.

This sequence belongs to the class-II aminoacyl-tRNA synthetase family. Type-1 seryl-tRNA synthetase subfamily. In terms of assembly, homodimer. The tRNA molecule binds across the dimer.

The protein resides in the cytoplasm. The enzyme catalyses tRNA(Ser) + L-serine + ATP = L-seryl-tRNA(Ser) + AMP + diphosphate + H(+). The catalysed reaction is tRNA(Sec) + L-serine + ATP = L-seryl-tRNA(Sec) + AMP + diphosphate + H(+). It participates in aminoacyl-tRNA biosynthesis; selenocysteinyl-tRNA(Sec) biosynthesis; L-seryl-tRNA(Sec) from L-serine and tRNA(Sec): step 1/1. Catalyzes the attachment of serine to tRNA(Ser). Is also able to aminoacylate tRNA(Sec) with serine, to form the misacylated tRNA L-seryl-tRNA(Sec), which will be further converted into selenocysteinyl-tRNA(Sec). This is Serine--tRNA ligase from Pyrococcus horikoshii (strain ATCC 700860 / DSM 12428 / JCM 9974 / NBRC 100139 / OT-3).